The chain runs to 150 residues: SsrA-binding protein (150 aa).

The tract at residues 130-150 (DKRESLKEKDDRREMDRMFKR) is disordered.

The protein belongs to the SmpB family.

The protein localises to the cytoplasm. In terms of biological role, required for rescue of stalled ribosomes mediated by trans-translation. Binds to transfer-messenger RNA (tmRNA), required for stable association of tmRNA with ribosomes. tmRNA and SmpB together mimic tRNA shape, replacing the anticodon stem-loop with SmpB. tmRNA is encoded by the ssrA gene; the 2 termini fold to resemble tRNA(Ala) and it encodes a 'tag peptide', a short internal open reading frame. During trans-translation Ala-aminoacylated tmRNA acts like a tRNA, entering the A-site of stalled ribosomes, displacing the stalled mRNA. The ribosome then switches to translate the ORF on the tmRNA; the nascent peptide is terminated with the 'tag peptide' encoded by the tmRNA and targeted for degradation. The ribosome is freed to recommence translation, which seems to be the essential function of trans-translation. The chain is SsrA-binding protein from Phocaeicola vulgatus (strain ATCC 8482 / DSM 1447 / JCM 5826 / CCUG 4940 / NBRC 14291 / NCTC 11154) (Bacteroides vulgatus).